Consider the following 413-residue polypeptide: PCI domain-containing protein 2 homolog (413 aa).

The region spanning 222–403 (VAYNYFLGRK…QKLVISKMNA (182 aa)) is the PCI domain.

This sequence belongs to the CSN12 family.

In Caenorhabditis elegans, this protein is PCI domain-containing protein 2 homolog.